A 137-amino-acid polypeptide reads, in one-letter code: Probable disulfide formation protein C (137 aa).

Residues 6–25 traverse the membrane as a helical segment; that stretch reads ENLMLGSWLTALTAMLGSLY. Cys35 and Cys38 form a disulfide bridge. 2 helical membrane passes run 40–59 and 66–83; these read YQRIIMYPLVLILFIGYLKR and YSLWFSLIGMFTSLYHYS. Cysteines 97 and 102 form a disulfide. A helical membrane pass occupies residues 111–133; the sequence is GFVTIPFLAFTAFVIIFICSLLI.

This sequence belongs to the DsbB family. BdbC subfamily.

The protein resides in the cell membrane. Required for disulfide bond formation in some proteins. In Halalkalibacterium halodurans (strain ATCC BAA-125 / DSM 18197 / FERM 7344 / JCM 9153 / C-125) (Bacillus halodurans), this protein is Probable disulfide formation protein C.